The sequence spans 121 residues: NAD(P)H-quinone oxidoreductase subunit M (121 aa).

This sequence belongs to the complex I NdhM subunit family. NDH-1 can be composed of about 15 different subunits; different subcomplexes with different compositions have been identified which probably have different functions.

The protein resides in the cellular thylakoid membrane. It catalyses the reaction a plastoquinone + NADH + (n+1) H(+)(in) = a plastoquinol + NAD(+) + n H(+)(out). The enzyme catalyses a plastoquinone + NADPH + (n+1) H(+)(in) = a plastoquinol + NADP(+) + n H(+)(out). In terms of biological role, NDH-1 shuttles electrons from an unknown electron donor, via FMN and iron-sulfur (Fe-S) centers, to quinones in the respiratory and/or the photosynthetic chain. The immediate electron acceptor for the enzyme in this species is believed to be plastoquinone. Couples the redox reaction to proton translocation, and thus conserves the redox energy in a proton gradient. Cyanobacterial NDH-1 also plays a role in inorganic carbon-concentration. In Nostoc punctiforme (strain ATCC 29133 / PCC 73102), this protein is NAD(P)H-quinone oxidoreductase subunit M.